We begin with the raw amino-acid sequence, 95 residues long: NADH-quinone oxidoreductase subunit K (95 aa).

A run of 3 helical transmembrane segments spans residues 1–21 (MSYL…VLTR), 25–45 (ILVF…LVGF), and 59–79 (MVIA…VAIF).

Belongs to the complex I subunit 4L family. In terms of assembly, NDH-1 is composed of 15 different subunits. Subunits NuoA, H, J, K, L, M, N constitute the membrane sector of the complex.

It localises to the cell inner membrane. It carries out the reaction a quinone + NADH + 5 H(+)(in) = a quinol + NAD(+) + 4 H(+)(out). In terms of biological role, NDH-1 shuttles electrons from NADH, via FMN and iron-sulfur (Fe-S) centers, to quinones in the respiratory chain. The immediate electron acceptor for the enzyme in this species is believed to be a menaquinone. Couples the redox reaction to proton translocation (for every two electrons transferred, four hydrogen ions are translocated across the cytoplasmic membrane), and thus conserves the redox energy in a proton gradient. The protein is NADH-quinone oxidoreductase subunit K of Thermus thermophilus (strain ATCC BAA-163 / DSM 7039 / HB27).